A 456-amino-acid polypeptide reads, in one-letter code: Glycosyl hydrolase family 109 protein (456 aa).

Positions 1–31 form a signal peptide, tat-type signal; sequence MKLNRRHFLKTAGLSAAGILTSQLPLSSAEA. Residues 62–63, Asp-84, 133–136, 153–154, and Asn-182 contribute to the NAD(+) site; these read QR, WEWH, and EV. Residues Tyr-211, Arg-230, 242–245, and Tyr-324 contribute to the substrate site; that span reads YPTH. Tyr-242 contributes to the NAD(+) binding site.

It belongs to the Gfo/Idh/MocA family. Glycosyl hydrolase 109 subfamily. NAD(+) is required as a cofactor. Post-translationally, predicted to be exported by the Tat system. The position of the signal peptide cleavage has not been experimentally proven.

Its function is as follows. Glycosidase. This chain is Glycosyl hydrolase family 109 protein, found in Shewanella pealeana (strain ATCC 700345 / ANG-SQ1).